The sequence spans 345 residues: Probable translocation protein y4yO (345 aa).

The span at 1–22 (MSDTSEEKSHGATPKKLSDARK) shows a compositional bias: basic and acidic residues. Residues 1–25 (MSDTSEEKSHGATPKKLSDARKRGQ) are disordered. 3 helical membrane passes run 87-107 (LATV…AALL), 151-171 (VLVL…TMVY), and 189-209 (QLIG…LLLQ).

This sequence belongs to the type III secretion exporter family.

The protein resides in the cell membrane. Could be involved in the secretion of an unknown factor. This chain is Probable translocation protein y4yO, found in Sinorhizobium fredii (strain NBRC 101917 / NGR234).